Reading from the N-terminus, the 485-residue chain is Glutamyl-tRNA(Gln) amidotransferase subunit A (485 aa).

Catalysis depends on charge relay system residues Lys79 and Ser154. The Acyl-ester intermediate role is filled by Ser178.

This sequence belongs to the amidase family. GatA subfamily. As to quaternary structure, heterotrimer of A, B and C subunits.

The enzyme catalyses L-glutamyl-tRNA(Gln) + L-glutamine + ATP + H2O = L-glutaminyl-tRNA(Gln) + L-glutamate + ADP + phosphate + H(+). Allows the formation of correctly charged Gln-tRNA(Gln) through the transamidation of misacylated Glu-tRNA(Gln) in organisms which lack glutaminyl-tRNA synthetase. The reaction takes place in the presence of glutamine and ATP through an activated gamma-phospho-Glu-tRNA(Gln). In Clostridium botulinum (strain Okra / Type B1), this protein is Glutamyl-tRNA(Gln) amidotransferase subunit A.